The chain runs to 202 residues: Transcriptional regulator SdrP (202 aa).

One can recognise an HTH crp-type domain in the interval 117-189; sequence QRLKNRMAAA…YGKIQLLDLK (73 aa). The segment at residues 149–168 is a DNA-binding region (H-T-H motif); that stretch reads HDELAAAVGSVRETVTKVIG.

In terms of assembly, homodimer.

Functionally, activates transcription. The consensus DNA-binding site of this transcriptional regulator is 5'-WWGTGAN(5-7)ACACWW-3' in which W is A or T and N is G, A, T or C. Regulated genes include those encoding proteins involved in nutrient and energy supply, redox control and polyadenylation of mRNA. Also regulates genes involved in oxidative stress response such as genes encoding manganese superoxide dismutase and catalase, and genes encoding a protein involved in nucleotide excision repair of damaged DNA and putative proteins involved in redox control, protein degradation and transcriptional regulation. The polypeptide is Transcriptional regulator SdrP (Thermus thermophilus (strain ATCC 27634 / DSM 579 / HB8)).